A 234-amino-acid chain; its full sequence is MATERYSFSLTTFSPSGKLVQLEYALAAVSGGAPSVGIIASNGVVIATENKHKSPLYEQHSVHRVEMIYNHIGMVYSGMGPDYRLLVKQARKIAQTYYLTYKEPIPVSQLVQRVATLMQEYTQSGGVRPFGVSLLICGWDNDRPYLYQSDPSGAYFAWKATAMGKNAVNGKTFLEKRYSEDLELDDAVHTAILTLKEGFEGKMTADNIEIGICDQNGFQRLDPASIKDYLASIP.

It belongs to the peptidase T1A family. As to quaternary structure, the 26S proteasome consists of a 20S proteasome core and two 19S regulatory subunits. The 20S proteasome core is composed of 28 subunits that are arranged in four stacked rings, resulting in a barrel-shaped structure. The two end rings are each formed by seven alpha subunits, and the two central rings are each formed by seven beta subunits. The catalytic chamber with the active sites is on the inside of the barrel. Interacts with Rpn6.

The protein resides in the cytoplasm. The protein localises to the nucleus. Its function is as follows. The proteasome is a multicatalytic proteinase complex which is characterized by its ability to cleave peptides with Arg, Phe, Tyr, Leu, and Glu adjacent to the leaving group at neutral or slightly basic pH. The proteasome has an ATP-dependent proteolytic activity. This is Proteasome subunit alpha type-2 (Prosalpha2) from Drosophila melanogaster (Fruit fly).